The chain runs to 456 residues: Glycerol-3-phosphate acyltransferase 4 (456 aa).

A signal peptide spans 1–37 (MFLLLPFDSLIVNLLGISLTVLFTLLLVFIIVPAIFG). 2 consecutive transmembrane segments (helical) span residues 156–176 (ISLRLTVLWGLGVLIRYCFLL) and 180–200 (IALAFTGISLLVVGTTVVGYL). A glycan (N-linked (GlcNAc...) asparagine) is linked at Asn247. The HXXXXD motif signature appears at 248–253 (HTSPID). N-linked (GlcNAc...) asparagine glycosylation is found at Asn327, Asn328, and Asn362.

The protein belongs to the 1-acyl-sn-glycerol-3-phosphate acyltransferase family.

It is found in the endoplasmic reticulum membrane. It catalyses the reaction sn-glycerol 3-phosphate + an acyl-CoA = a 1-acyl-sn-glycero-3-phosphate + CoA. It carries out the reaction dodecanoyl-CoA + sn-glycerol 3-phosphate = 1-dodecanoyl-sn-glycerol 3-phosphate + CoA. The enzyme catalyses sn-glycerol 3-phosphate + hexadecanoyl-CoA = 1-hexadecanoyl-sn-glycero-3-phosphate + CoA. The catalysed reaction is sn-glycerol 3-phosphate + octadecanoyl-CoA = 1-octadecanoyl-sn-glycero-3-phosphate + CoA. It catalyses the reaction sn-glycerol 3-phosphate + (9Z)-octadecenoyl-CoA = 1-(9Z-octadecenoyl)-sn-glycero-3-phosphate + CoA. It carries out the reaction (9Z,12Z)-octadecadienoyl-CoA + sn-glycerol 3-phosphate = 1-(9Z,12Z)-octadecadienoyl-sn-glycero-3-phosphate + CoA. The protein operates within phospholipid metabolism; CDP-diacylglycerol biosynthesis; CDP-diacylglycerol from sn-glycerol 3-phosphate: step 1/3. Converts glycerol-3-phosphate to 1-acyl-sn-glycerol-3-phosphate (lysophosphatidic acid or LPA) by incorporating an acyl moiety at the sn-1 position of the glycerol backbone. Active against both saturated and unsaturated long-chain fatty acyl-CoAs. Protects cells against lipotoxicity. This Pongo abelii (Sumatran orangutan) protein is Glycerol-3-phosphate acyltransferase 4.